The primary structure comprises 86 residues: UPF0297 protein SH1302 (86 aa).

The protein belongs to the UPF0297 family.

This Staphylococcus haemolyticus (strain JCSC1435) protein is UPF0297 protein SH1302.